The primary structure comprises 605 residues: Isocitrate dehydrogenase kinase/phosphatase (605 aa).

Residues 327-333 (APGIKGL) and Lys-348 contribute to the ATP site. The active site involves Asp-383.

Belongs to the AceK family.

It localises to the cytoplasm. The catalysed reaction is L-seryl-[isocitrate dehydrogenase] + ATP = O-phospho-L-seryl-[isocitrate dehydrogenase] + ADP + H(+). Bifunctional enzyme which can phosphorylate or dephosphorylate isocitrate dehydrogenase (IDH) on a specific serine residue. This is a regulatory mechanism which enables bacteria to bypass the Krebs cycle via the glyoxylate shunt in response to the source of carbon. When bacteria are grown on glucose, IDH is fully active and unphosphorylated, but when grown on acetate or ethanol, the activity of IDH declines drastically concomitant with its phosphorylation. This is Isocitrate dehydrogenase kinase/phosphatase from Burkholderia orbicola (strain AU 1054).